The sequence spans 253 residues: Phosphate import ATP-binding protein PstB 1 (253 aa).

Residues 7–248 enclose the ABC transporter domain; the sequence is LQIRDLSVYY…PKRKETEDYI (242 aa). Position 39–46 (39–46) interacts with ATP; sequence GPSGSGKS.

The protein belongs to the ABC transporter superfamily. Phosphate importer (TC 3.A.1.7) family. As to quaternary structure, the complex is composed of two ATP-binding proteins (PstB), two transmembrane proteins (PstC and PstA) and a solute-binding protein (PstS).

It is found in the cell membrane. The catalysed reaction is phosphate(out) + ATP + H2O = ADP + 2 phosphate(in) + H(+). Part of the ABC transporter complex PstSACB involved in phosphate import. Responsible for energy coupling to the transport system. This chain is Phosphate import ATP-binding protein PstB 1, found in Streptococcus pyogenes serotype M12 (strain MGAS9429).